A 133-amino-acid polypeptide reads, in one-letter code: MVVSDPVADFLTRIRNGTKAQHRYVDVNWSKMKQTLAEILKNQGFIENYLVKVDEGQRGTIRIFLKYTNGRRPVIQGLKRISKPGLRKYVGHQDIPRFYGNMGLSIVSTSQGVMAGNEATQRGIGGELLCLIW.

It belongs to the universal ribosomal protein uS8 family. As to quaternary structure, part of the 30S ribosomal subunit. Contacts proteins S5 and S12.

Functionally, one of the primary rRNA binding proteins, it binds directly to 16S rRNA central domain where it helps coordinate assembly of the platform of the 30S subunit. The protein is Small ribosomal subunit protein uS8 of Protochlamydia amoebophila (strain UWE25).